Here is a 438-residue protein sequence, read N- to C-terminus: Cell division cycle-associated 7-like protein (438 aa).

Residues 9–33 carry the Integrase domain-binding motif 1 (IBM1) motif; it reads IPKEVADIFSAPSDDEEFVGFQDDV. Ser21 carries the post-translational modification Phosphoserine. The tract at residues 56–115 is PSIP1-binding; that stretch reads VCFRSKYFTEELRRIFKEDTDSEMEDFEGFTESELNMSSNPELMESELSDSDKAYPVMND. An Integrase domain-binding motif 2 (IBM2) motif is present at residues 63–89; the sequence is FTEELRRIFKEDTDSEMEDFEGFTESE. The tract at residues 74–199 is disordered; that stretch reads DTDSEMEDFE…ESRAESQENS (126 aa). Thr75 bears the Phosphothreonine mark. Over residues 75 to 86 the composition is skewed to acidic residues; the sequence is TDSEMEDFEGFT. Ser77 carries the phosphoserine modification. Thr86 is modified (phosphothreonine). Residues Ser101, Ser104, Ser135, Ser136, and Ser159 each carry the phosphoserine modification. Positions 152–167 are enriched in basic and acidic residues; sequence RTPDKDSSHLLDSKTD. Residues 168–177 show a composition bias toward basic residues; the sequence is LRRKKSSRQP. Ser183 and Ser185 each carry phosphoserine. The interval 201-223 is MYC-binding; it reads ALLKRAMNIKENKAMLAQLLAEL. Glycyl lysine isopeptide (Lys-Gly) (interchain with G-Cter in SUMO2) cross-links involve residues Lys210 and Lys213. Phosphoserine is present on Ser249.

Interacts with MYC. Interacts (via IBM motifs) with PSIP1 (via IBD domain); phosphorylation increases its affinity for PSIP1. Phosphorylation increases its interaction with PSIP1. In terms of tissue distribution, expressed in all tissues but not detected in total brain.

The protein resides in the cytoplasm. Its subcellular location is the nucleus. In terms of biological role, plays a role in transcriptional regulation as a repressor that inhibits monoamine oxidase A (MAOA) activity and gene expression by binding to the promoter. Plays an important oncogenic role in mediating the full transforming effect of MYC in medulloblastoma cells. Involved in apoptotic signaling pathways; May act downstream of P38-kinase and BCL-2, but upstream of CASP3/caspase-3 as well as CCND1/cyclin D1 and E2F1. In Mus musculus (Mouse), this protein is Cell division cycle-associated 7-like protein (Cdca7l).